Here is a 188-residue protein sequence, read N- to C-terminus: Elongation factor P (188 aa).

It belongs to the elongation factor P family.

Its subcellular location is the cytoplasm. The protein operates within protein biosynthesis; polypeptide chain elongation. Its function is as follows. Involved in peptide bond synthesis. Stimulates efficient translation and peptide-bond synthesis on native or reconstituted 70S ribosomes in vitro. Probably functions indirectly by altering the affinity of the ribosome for aminoacyl-tRNA, thus increasing their reactivity as acceptors for peptidyl transferase. This is Elongation factor P from Leptospira biflexa serovar Patoc (strain Patoc 1 / Ames).